Here is a 419-residue protein sequence, read N- to C-terminus: Tyrosine--tRNA ligase (419 aa).

Position 34 (tyrosine 34) interacts with L-tyrosine. Positions proline 39–asparagine 48 match the 'HIGH' region motif. Positions 169 and 173 each coordinate L-tyrosine. The 'KMSKS' region motif lies at lysine 229 to serine 233. Residue lysine 232 coordinates ATP. In terms of domain architecture, S4 RNA-binding spans leucine 353 to tyrosine 419.

This sequence belongs to the class-I aminoacyl-tRNA synthetase family. TyrS type 1 subfamily. As to quaternary structure, homodimer.

The protein resides in the cytoplasm. It catalyses the reaction tRNA(Tyr) + L-tyrosine + ATP = L-tyrosyl-tRNA(Tyr) + AMP + diphosphate + H(+). Its function is as follows. Catalyzes the attachment of tyrosine to tRNA(Tyr) in a two-step reaction: tyrosine is first activated by ATP to form Tyr-AMP and then transferred to the acceptor end of tRNA(Tyr). This chain is Tyrosine--tRNA ligase, found in Lactococcus lactis subsp. cremoris (strain MG1363).